The primary structure comprises 950 residues: MORC family CW-type zinc finger protein 1 (950 aa).

Positions lysine 281–glutamine 342 form a coiled coil. Residues serine 465–serine 530 form a CW-type zinc finger. 4 residues coordinate Zn(2+): cysteine 485, cysteine 488, cysteine 511, and cysteine 522. 2 disordered regions span residues proline 532–glutamine 551 and lysine 679–arginine 700. A compositionally biased stretch (basic and acidic residues) spans proline 541–leucine 550. Residues leucine 885–glycine 916 adopt a coiled-coil conformation.

In terms of tissue distribution, expressed at very low level in male germ cells.

The protein localises to the nucleus. In terms of biological role, required for spermatogenesis. Essential for de novo DNA methylation and silencing of transposable elements in the male embryonic germ cells. Not required for piRNA biosynthesis. The sequence is that of MORC family CW-type zinc finger protein 1 from Mus musculus (Mouse).